Consider the following 116-residue polypeptide: NADH-ubiquinone oxidoreductase chain 3 (116 aa).

The next 3 helical transmembrane spans lie at 3 to 23 (LLMTIITITALLSTILAIVSF), 56 to 76 (FFLIAILFLLFDLEIALLLPL), and 85 to 105 (PLLTFTWATAVLFLLTLGLIY).

The protein belongs to the complex I subunit 3 family.

The protein resides in the mitochondrion membrane. It carries out the reaction a ubiquinone + NADH + 5 H(+)(in) = a ubiquinol + NAD(+) + 4 H(+)(out). Functionally, core subunit of the mitochondrial membrane respiratory chain NADH dehydrogenase (Complex I) that is believed to belong to the minimal assembly required for catalysis. Complex I functions in the transfer of electrons from NADH to the respiratory chain. The immediate electron acceptor for the enzyme is believed to be ubiquinone. The chain is NADH-ubiquinone oxidoreductase chain 3 (MT-ND3) from Paralichthys olivaceus (Bastard halibut).